Reading from the N-terminus, the 112-residue chain is Large ribosomal subunit protein uL22 (112 aa).

The protein belongs to the universal ribosomal protein uL22 family. As to quaternary structure, part of the 50S ribosomal subunit.

Functionally, this protein binds specifically to 23S rRNA; its binding is stimulated by other ribosomal proteins, e.g. L4, L17, and L20. It is important during the early stages of 50S assembly. It makes multiple contacts with different domains of the 23S rRNA in the assembled 50S subunit and ribosome. The globular domain of the protein is located near the polypeptide exit tunnel on the outside of the subunit, while an extended beta-hairpin is found that lines the wall of the exit tunnel in the center of the 70S ribosome. In Anaplasma phagocytophilum (strain HZ), this protein is Large ribosomal subunit protein uL22.